The following is a 248-amino-acid chain: tRNA (guanine-N(1)-)-methyltransferase (248 aa).

S-adenosyl-L-methionine-binding positions include Gly116 and Ile135–Leu140.

This sequence belongs to the RNA methyltransferase TrmD family. Homodimer.

It localises to the cytoplasm. The enzyme catalyses guanosine(37) in tRNA + S-adenosyl-L-methionine = N(1)-methylguanosine(37) in tRNA + S-adenosyl-L-homocysteine + H(+). Its function is as follows. Specifically methylates guanosine-37 in various tRNAs. This Anaeromyxobacter sp. (strain Fw109-5) protein is tRNA (guanine-N(1)-)-methyltransferase.